The sequence spans 180 residues: Cell wall / vacuolar inhibitor of fructosidase 2 (180 aa).

An N-terminal signal peptide occupies residues 1-23 (MASSLIFLLLVTLTFSASTLISA). N-linked (GlcNAc...) asparagine glycosylation is present at N26. C35 and C44 are disulfide-bonded. Residues N73 and N84 are each glycosylated (N-linked (GlcNAc...) asparagine). C101 and C141 are disulfide-bonded.

Belongs to the PMEI family. As to expression, mostly expressed at low levels in seedlings, stems, leaves and flowers (in all organs), and, to a lower extent, in roots and siliques.

Its subcellular location is the vacuole. In terms of biological role, inhibits fructosidases from both cell wall (cell wall invertase CWI) and vacuoles (vacuolar invertase VI). The polypeptide is Cell wall / vacuolar inhibitor of fructosidase 2 (C/VIF2) (Arabidopsis thaliana (Mouse-ear cress)).